Reading from the N-terminus, the 234-residue chain is uncharacterized protein (234 aa).

10 to 34 (VVTGASSGIGASIAETLANQGVKVV) contacts NADP(+). A substrate-binding site is contributed by Ser143. The active-site Proton acceptor is the Tyr156.

Belongs to the short-chain dehydrogenases/reductases (SDR) family.

This is an uncharacterized protein from Staphylococcus saprophyticus subsp. saprophyticus (strain ATCC 15305 / DSM 20229 / NCIMB 8711 / NCTC 7292 / S-41).